The chain runs to 143 residues: Transcriptional regulator SlyA (143 aa).

Positions 2–135 (ESTLGSDLAR…LSTLVQKLEQ (134 aa)) constitute an HTH marR-type domain. A DNA-binding region (H-T-H motif) is located at residues 49–72 (QIQLAKAIGIEQPSLVRTLDQLEE).

It belongs to the SlyA family. Homodimer.

In terms of biological role, transcription regulator that can specifically activate or repress expression of target genes. Regulates the cpm operon, which contains cpmA, cpmB, cpmC, cpmD, cpmE, cpmF, cpmG and cpmH, involved in carbapenem-like antibiotic production. The polypeptide is Transcriptional regulator SlyA (Photorhabdus laumondii subsp. laumondii (strain DSM 15139 / CIP 105565 / TT01) (Photorhabdus luminescens subsp. laumondii)).